The following is a 557-amino-acid chain: Syntaxin-binding protein 4 (557 aa).

Phosphoserine occurs at positions 10 and 12. A PDZ domain is found at 19-105 (AFRVITVTKE…RSESPWEIAF (87 aa)). Phosphoserine; by PKB/AKT2 is present on Ser99. Positions 142–154 (PSETLLPKTSSTP) are enriched in low complexity. The disordered stretch occupies residues 142–214 (PSETLLPKTS…SGPQGKISLN (73 aa)). Residues 179-194 (SPITSLDNSPADTSNA) are compositionally biased toward polar residues. The residue at position 216 (Ser216) is a Phosphoserine. Positions 298-408 (ADEVGKLRQE…NKESVQDLRK (111 aa)) form a coiled coil. Ser467 is subject to Phosphoserine. One can recognise a WW domain in the interval 500 to 533 (DCLPYGWEEAYTADGIKYFINHVTQTTSWIHPVM).

Interacts with STX4A. Post-translationally, phosphorylated on Ser-99 by PKB/AKT2 after insulin treatment. Phosphorylation on Ser-99 abolishes the interaction with STX4A. In terms of tissue distribution, detected in skeletal muscle, heart, testis, adipocytes and pancreatic islet cells.

The protein resides in the cytoplasm. Functionally, plays a role in the translocation of transport vesicles from the cytoplasm to the plasma membrane. Inhibits the translocation of SLC2A4 from intracellular vesicles to the plasma membrane by STX4A binding and preventing the interaction between STX4A and VAMP2. Stimulation with insulin disrupts the interaction with STX4A, leading to increased levels of SLC2A4 at the plasma membrane. May also play a role in the regulation of insulin release by pancreatic beta cells after stimulation by glucose. This Mus musculus (Mouse) protein is Syntaxin-binding protein 4 (Stxbp4).